The following is a 208-amino-acid chain: Octanoyltransferase (208 aa).

Positions 30-208 (GTASEAVFIL…ILKQEFYKIF (179 aa)) constitute a BPL/LPL catalytic domain. Residues 69–76 (RGGKFTYH), 142–144 (SIG), and 155–157 (GVA) contribute to the substrate site. C173 serves as the catalytic Acyl-thioester intermediate.

This sequence belongs to the LipB family.

The protein resides in the cytoplasm. It catalyses the reaction octanoyl-[ACP] + L-lysyl-[protein] = N(6)-octanoyl-L-lysyl-[protein] + holo-[ACP] + H(+). Its pathway is protein modification; protein lipoylation via endogenous pathway; protein N(6)-(lipoyl)lysine from octanoyl-[acyl-carrier-protein]: step 1/2. Its function is as follows. Catalyzes the transfer of endogenously produced octanoic acid from octanoyl-acyl-carrier-protein onto the lipoyl domains of lipoate-dependent enzymes. Lipoyl-ACP can also act as a substrate although octanoyl-ACP is likely to be the physiological substrate. In Orientia tsutsugamushi (strain Ikeda) (Rickettsia tsutsugamushi), this protein is Octanoyltransferase.